Consider the following 519-residue polypeptide: Xylose import ATP-binding protein XylG (519 aa).

2 ABC transporter domains span residues 6-245 and 262-507; these read LTMR…VGRE and LEAR…LTPA. 38–45 provides a ligand contact to ATP; the sequence is GENGAGKS.

The protein belongs to the ABC transporter superfamily. Xylose importer (TC 3.A.1.2.4) family. The complex is composed of two ATP-binding proteins (XylG), two transmembrane proteins (XylH) and a solute-binding protein (XylF).

The protein localises to the cell inner membrane. The enzyme catalyses D-xylose(out) + ATP + H2O = D-xylose(in) + ADP + phosphate + H(+). Functionally, part of the ABC transporter complex XylFGH involved in xylose import. Responsible for energy coupling to the transport system. The polypeptide is Xylose import ATP-binding protein XylG (Burkholderia ambifaria (strain ATCC BAA-244 / DSM 16087 / CCUG 44356 / LMG 19182 / AMMD) (Burkholderia cepacia (strain AMMD))).